Consider the following 371-residue polypeptide: Succinyl-diaminopimelate desuccinylase (371 aa).

His-68 serves as a coordination point for Zn(2+). Residue Asp-70 is part of the active site. A Zn(2+)-binding site is contributed by Asp-99. Catalysis depends on Glu-130, which acts as the Proton acceptor. Zn(2+) is bound by residues Glu-131, Glu-159, and His-344.

It belongs to the peptidase M20A family. DapE subfamily. Homodimer. Zn(2+) serves as cofactor. Requires Co(2+) as cofactor.

The catalysed reaction is N-succinyl-(2S,6S)-2,6-diaminopimelate + H2O = (2S,6S)-2,6-diaminopimelate + succinate. It participates in amino-acid biosynthesis; L-lysine biosynthesis via DAP pathway; LL-2,6-diaminopimelate from (S)-tetrahydrodipicolinate (succinylase route): step 3/3. Functionally, catalyzes the hydrolysis of N-succinyl-L,L-diaminopimelic acid (SDAP), forming succinate and LL-2,6-diaminopimelate (DAP), an intermediate involved in the bacterial biosynthesis of lysine and meso-diaminopimelic acid, an essential component of bacterial cell walls. This is Succinyl-diaminopimelate desuccinylase from Acidiphilium cryptum (strain JF-5).